Here is a 375-residue protein sequence, read N- to C-terminus: FAD-dependent catabolic D-arginine dehydrogenase DauA (375 aa).

FAD-binding positions include A14, 32-33 (ER), 41-48 (STGRSAAH), A171, and 331-336 (GGYGIQ).

Belongs to the FAD-dependent glycerol-3-phosphate dehydrogenase family. In terms of assembly, monomer. FAD serves as cofactor.

The catalysed reaction is D-arginine + A + H2O = 5-guanidino-2-oxopentanoate + AH2 + NH4(+). It catalyses the reaction a D-alpha-amino acid + A + H2O = a 2-oxocarboxylate + AH2 + NH4(+). With respect to regulation, inhibited by D-arginine and D-lysine at high concentration. Functionally, dauA is highly expressed within the cystic fibrosis (CF) lung, and it is required for virulence via the optimal production of hydrogen cyanide, pyocyanine, pyoverdine, rhamnolipid and alginate during biofilm formation. Involved in the catabolism of D-lysine and D-arginine. Under aerobic conditions, the arginine succinyltransferase (AST) and arginine transaminase (ATA) pathways are 2 major routes for L-arginine utilization as the sole source of carbon and nitrogen. The D-to-L racemization of arginine by DauA and DauB is necessary, before to be channeled into the AST and/or ATA pathways. DauA catalyzes the flavin-dependent oxidative deamination of D-arginine into 2-ketoarginine (2-KA) and ammonia. It also has dehydrogenase activity towards D-lysine, D-tyrosine, D-methionine, D-phenylalanine, D-ornithine, D-histidine and D-leucine as substrates. The protein is FAD-dependent catabolic D-arginine dehydrogenase DauA of Pseudomonas aeruginosa (strain ATCC 15692 / DSM 22644 / CIP 104116 / JCM 14847 / LMG 12228 / 1C / PRS 101 / PAO1).